The primary structure comprises 185 residues: Translocon-associated protein subunit gamma (185 aa).

Methionine 1 carries the post-translational modification N-acetylmethionine. Residues 1 to 27 lie on the Lumenal side of the membrane; it reads MAPKGSSKQQSEEDLLLQDFSRNLSAK. A phosphoserine mark is found at serine 7 and serine 11. Residues 28 to 48 form a helical membrane-spanning segment; it reads SSALFFGNAFIVSAIPIWLYW. Topologically, residues 49-54 are cytoplasmic; that stretch reads RIWHMD. Residues 55 to 76 form a helical membrane-spanning segment; sequence LIQSAVLYSVMTLVSTYLVAFA. Residues 77 to 135 are Lumenal-facing; the sequence is YKNVKFVLKHKVAQKREDAVSKEVTRKLSEADNRKMSRKEKDERILWKKNEVADYEATT. Serine 105 carries the phosphoserine modification. A helical membrane pass occupies residues 136-157; sequence FSIFYNNTLFLVVVIVASFFIL. Topologically, residues 158–163 are cytoplasmic; sequence KNFNPT. A helical transmembrane segment spans residues 164 to 184; sequence VNYILSISASSGLIALLSTGS.

It belongs to the TRAP-gamma family. In terms of assembly, heterotetramer of TRAP-alpha, TRAP-beta, TRAP-delta and TRAP-gamma.

The protein resides in the endoplasmic reticulum membrane. In terms of biological role, TRAP proteins are part of a complex whose function is to bind calcium to the ER membrane and thereby regulate the retention of ER resident proteins. The chain is Translocon-associated protein subunit gamma (SSR3) from Homo sapiens (Human).